A 179-amino-acid polypeptide reads, in one-letter code: MAEERSQRSRDRSREEKIDDGMIEKLVAVNRVSKTVKGGRQFTFTALTIVGNGEGSVGFGYGKAREVPVAIQKSMEYARKRMSNVSLNNGTLWHPVKANHGAASVFMKPASEGTGVIAGGAMRAVLEAVGVKNVLAKAIGSRNPINLVRATLKGLEDMQSPTHIALKRGKNVRDFSHGS.

Residues 22–85 enclose the S5 DRBM domain; the sequence is MIEKLVAVNR…EYARKRMSNV (64 aa).

Belongs to the universal ribosomal protein uS5 family. In terms of assembly, part of the 30S ribosomal subunit. Contacts proteins S4 and S8.

With S4 and S12 plays an important role in translational accuracy. Its function is as follows. Located at the back of the 30S subunit body where it stabilizes the conformation of the head with respect to the body. The polypeptide is Small ribosomal subunit protein uS5 (Xylella fastidiosa (strain M23)).